Reading from the N-terminus, the 134-residue chain is Small ribosomal subunit protein uS11 (134 aa).

The segment at 114-134 (TPVPHNGTRPPRKWFKRQEKR) is disordered. Residues 123 to 134 (PPRKWFKRQEKR) are compositionally biased toward basic residues.

Belongs to the universal ribosomal protein uS11 family. Part of the 30S ribosomal subunit. Interacts with proteins S7 and S18. Binds to IF-3.

Its function is as follows. Located on the platform of the 30S subunit, it bridges several disparate RNA helices of the 16S rRNA. Forms part of the Shine-Dalgarno cleft in the 70S ribosome. This Mesomycoplasma hyopneumoniae (strain J / ATCC 25934 / NCTC 10110) (Mycoplasma hyopneumoniae) protein is Small ribosomal subunit protein uS11.